Consider the following 543-residue polypeptide: Phosphatidylinositol/phosphatidylcholine transfer protein SFH12 (543 aa).

The CRAL-TRIO domain occupies 120 to 294; it reads EIDEVLKYYP…FLGGSCTCAD (175 aa). The disordered stretch occupies residues 316 to 356; it reads HNGDHKCSKGSQAENSGEKTIPEEDDSTTEPASEEEKASKE. Residues 490–526 adopt a coiled-coil conformation; it reads DKEEMLNAAISRSNVLEQELAATKKALDDSLGRQEEL.

This sequence belongs to the SFH family. As to expression, specifically expressed in flowers.

The protein localises to the golgi apparatus membrane. It is found in the cell membrane. Required for transport of secretory proteins from the Golgi complex. Catalyzes the transfer of phosphatidylinositol and phosphatidylcholine between membranes in vitro. In Arabidopsis thaliana (Mouse-ear cress), this protein is Phosphatidylinositol/phosphatidylcholine transfer protein SFH12 (SFH12).